Here is a 447-residue protein sequence, read N- to C-terminus: Folate synthesis bifunctional protein (447 aa).

Positions 1–165 (MTTAQFICLS…SFGEIAHLLP (165 aa)) are HPPK. The Pterin-binding domain maps to 179–438 (TLLMGVVNVT…DVEANQRVLS (260 aa)). The tract at residues 181-447 (LMGVVNVTDN…SAAAWSGVHV (267 aa)) is DHPS. Asn-186 contacts Mg(2+). (7,8-dihydropterin-6-yl)methyl diphosphate is bound by residues Thr-226, Asp-266, Asn-286, Asp-356, Lys-392, and 426–428 (RVH).

In the C-terminal section; belongs to the DHPS family. This sequence in the N-terminal section; belongs to the HPPK family. The cofactor is Mg(2+).

It catalyses the reaction 6-hydroxymethyl-7,8-dihydropterin + ATP = (7,8-dihydropterin-6-yl)methyl diphosphate + AMP + H(+). It carries out the reaction (7,8-dihydropterin-6-yl)methyl diphosphate + 4-aminobenzoate = 7,8-dihydropteroate + diphosphate. It participates in cofactor biosynthesis; tetrahydrofolate biosynthesis; 2-amino-4-hydroxy-6-hydroxymethyl-7,8-dihydropteridine diphosphate from 7,8-dihydroneopterin triphosphate: step 4/4. Its pathway is cofactor biosynthesis; tetrahydrofolate biosynthesis; 7,8-dihydrofolate from 2-amino-4-hydroxy-6-hydroxymethyl-7,8-dihydropteridine diphosphate and 4-aminobenzoate: step 1/2. This chain is Folate synthesis bifunctional protein (folKP), found in Chlamydia caviae (strain ATCC VR-813 / DSM 19441 / 03DC25 / GPIC) (Chlamydophila caviae).